Here is a 130-residue protein sequence, read N- to C-terminus: HTH-type transcriptional repressor YtrA (130 aa).

Residues 10 to 78 (TPIYEQIIQQ…RGRGTYISEN (69 aa)) form the HTH gntR-type domain. The H-T-H motif DNA-binding region spans 38 to 57 (VRELATIIIANPNTVSKAYK).

In terms of biological role, negatively regulates ABC transporter complex ytrBCDEF that plays a role in acetoin utilization during stationary phase and sporulation. The polypeptide is HTH-type transcriptional repressor YtrA (ytrA) (Bacillus subtilis (strain 168)).